The chain runs to 402 residues: Phosphoglycerate kinase (402 aa).

Substrate is bound by residues 24 to 26, arginine 40, 63 to 66, arginine 122, and arginine 155; these read DFN and HFGR. ATP is bound by residues lysine 206, glycine 297, glutamate 328, and 357–360; that span reads GGDS.

It belongs to the phosphoglycerate kinase family. As to quaternary structure, monomer.

Its subcellular location is the cytoplasm. It catalyses the reaction (2R)-3-phosphoglycerate + ATP = (2R)-3-phospho-glyceroyl phosphate + ADP. It functions in the pathway carbohydrate degradation; glycolysis; pyruvate from D-glyceraldehyde 3-phosphate: step 2/5. This chain is Phosphoglycerate kinase, found in Synechococcus sp. (strain RCC307).